The primary structure comprises 87 residues: Olfactory receptor-like protein HbT2 (87 aa).

Residues 1-8 (KLWRMTGT) lie on the Cytoplasmic side of the membrane. Residues 9–29 (WLGGFCHSIIQIPVIIQLPFC) traverse the membrane as a helical segment. The Extracellular segment spans residues 30–55 (GPNVIDHYFRDLQPLFKLACTDTFME). A helical transmembrane segment spans residues 56–76 (GVIVLAFSGLFSVFSFLILVS). Residues 77 to 87 (SYIVILVNLRN) are Cytoplasmic-facing.

The protein belongs to the G-protein coupled receptor 1 family.

The protein resides in the cell membrane. Functionally, odorant receptor. In Apis mellifera ligustica (Common honeybee), this protein is Olfactory receptor-like protein HbT2.